The following is a 202-amino-acid chain: Glycerol-3-phosphate acyltransferase (202 aa).

6 consecutive transmembrane segments (helical) span residues 3 to 23 (NLII…LILA), 61 to 81 (IATI…LKFL), 87 to 107 (LLWS…YLLF), 118 to 138 (GAMI…WVVI), 144 to 164 (ISSL…FIFN), and 167 to 187 (LEIH…YKHL).

The protein belongs to the PlsY family. In terms of assembly, probably interacts with PlsX.

It is found in the cell inner membrane. The catalysed reaction is an acyl phosphate + sn-glycerol 3-phosphate = a 1-acyl-sn-glycero-3-phosphate + phosphate. The protein operates within lipid metabolism; phospholipid metabolism. Catalyzes the transfer of an acyl group from acyl-phosphate (acyl-PO(4)) to glycerol-3-phosphate (G3P) to form lysophosphatidic acid (LPA). This enzyme utilizes acyl-phosphate as fatty acyl donor, but not acyl-CoA or acyl-ACP. The polypeptide is Glycerol-3-phosphate acyltransferase (Campylobacter jejuni subsp. jejuni serotype O:6 (strain 81116 / NCTC 11828)).